We begin with the raw amino-acid sequence, 1197 residues long: DExH-box ATP-dependent RNA helicase DExH3 (1197 aa).

Positions 309-476 (LKAIAANQVV…FGGAPAMHIP (168 aa)) constitute a Helicase ATP-binding domain. Residue 322–329 (GETGCGKT) coordinates ATP. The DEIH box signature appears at 423–426 (DEIH). In terms of domain architecture, Helicase C-terminal spans 564 to 738 (LIENVLCHIV…SLCLQIKSLG (175 aa)).

It belongs to the DExH box helicase family.

It carries out the reaction ATP + H2O = ADP + phosphate + H(+). The polypeptide is DExH-box ATP-dependent RNA helicase DExH3 (Arabidopsis thaliana (Mouse-ear cress)).